Reading from the N-terminus, the 346-residue chain is Endosome-associated-trafficking regulator 1 (346 aa).

The span at 46 to 67 (FVSSNSKRAFSKDSNQSTTQFR) shows a compositional bias: polar residues. 3 disordered regions span residues 46 to 77 (FVSSNSKRAFSKDSNQSTTQFRGPSECPDGNL), 93 to 129 (LQEDEDDDWSGSYHPSVIENTHGPKVPSPAGTDGDES), and 153 to 173 (SPPAGLHGKTQHRPDSTSDSE). Residues 170-317 (SDSEEGLRLL…SGAQSSIKQL (148 aa)) are a coiled coil.

It belongs to the ENTR1 family.

Its subcellular location is the cytoplasm. The protein localises to the early endosome. It localises to the endosome. The protein resides in the recycling endosome. It is found in the midbody. Its subcellular location is the cytoskeleton. The protein localises to the microtubule organizing center. It localises to the centrosome. The protein resides in the cilium basal body. Functionally, endosome-associated protein that plays a role in membrane receptor sorting, cytokinesis and ciliogenesis. This chain is Endosome-associated-trafficking regulator 1, found in Xenopus tropicalis (Western clawed frog).